A 137-amino-acid polypeptide reads, in one-letter code: Large ribosomal subunit protein uL16 (137 aa).

This sequence belongs to the universal ribosomal protein uL16 family. In terms of assembly, part of the 50S ribosomal subunit.

Functionally, binds 23S rRNA and is also seen to make contacts with the A and possibly P site tRNAs. The chain is Large ribosomal subunit protein uL16 from Methylococcus capsulatus (strain ATCC 33009 / NCIMB 11132 / Bath).